Here is a 337-residue protein sequence, read N- to C-terminus: Dimethyladenosine transferase 1, mitochondrial (337 aa).

Residues 1 to 84 (MSQVTARVLN…RSILRRQPQR (84 aa)) constitute a mitochondrion transit peptide. S-adenosyl-L-methionine contacts are provided by residues 38-41 (QNFL), Asn-39, Leu-41, Gly-67, Glu-89, Asp-118, and Asn-140.

This sequence belongs to the class I-like SAM-binding methyltransferase superfamily. rRNA adenine N(6)-methyltransferase family. KsgA subfamily.

Its subcellular location is the mitochondrion. In terms of biological role, probable S-adenosyl-L-methionine-dependent methyltransferase which specifically dimethylates mitochondrial 12S rRNA at the conserved stem loop. This Drosophila pseudoobscura pseudoobscura (Fruit fly) protein is Dimethyladenosine transferase 1, mitochondrial (mtTFB1).